The sequence spans 306 residues: Ribonucleoside-diphosphate reductase small subunit (306 aa).

Residues D66, E96, and H99 each coordinate Fe cation. Residue Y103 is part of the active site. A helical membrane pass occupies residues 153-173; that stretch reads ILMILIEGIFFVSSFAAIAYL. Fe cation contacts are provided by E159, E193, and H196.

Belongs to the ribonucleoside diphosphate reductase small chain family. In terms of assembly, heterotetramer composed of a homodimer of the large subunit (R1) and a homodimer of the small subunit (R2). Larger multisubunit protein complex are also active, composed of (R1)n(R2)n. Requires Fe cation as cofactor.

It localises to the host membrane. The enzyme catalyses a 2'-deoxyribonucleoside 5'-diphosphate + [thioredoxin]-disulfide + H2O = a ribonucleoside 5'-diphosphate + [thioredoxin]-dithiol. Functionally, ribonucleoside-diphosphate reductase holoenzyme provides the precursors necessary for viral DNA synthesis. Allows virus growth in non-dividing cells, as well as reactivation from latency in infected hosts. Catalyzes the biosynthesis of deoxyribonucleotides from the corresponding ribonucleotides. This chain is Ribonucleoside-diphosphate reductase small subunit, found in Varicella-zoster virus (strain Dumas) (HHV-3).